The primary structure comprises 400 residues: Argininosuccinate synthase (400 aa).

8-16 (AYSGGLDTS) is a binding site for ATP. L-citrulline contacts are provided by Tyr-87 and Ser-92. Residue Gly-117 participates in ATP binding. Thr-119, Asn-123, and Asp-124 together coordinate L-aspartate. Asn-123 serves as a coordination point for L-citrulline. Arg-127, Ser-175, Glu-259, and Tyr-271 together coordinate L-citrulline.

This sequence belongs to the argininosuccinate synthase family. Type 1 subfamily. As to quaternary structure, homotetramer.

Its subcellular location is the cytoplasm. It catalyses the reaction L-citrulline + L-aspartate + ATP = 2-(N(omega)-L-arginino)succinate + AMP + diphosphate + H(+). It participates in amino-acid biosynthesis; L-arginine biosynthesis; L-arginine from L-ornithine and carbamoyl phosphate: step 2/3. The polypeptide is Argininosuccinate synthase (Frankia casuarinae (strain DSM 45818 / CECT 9043 / HFP020203 / CcI3)).